The primary structure comprises 250 residues: 23S rRNA (guanosine-2'-O-)-methyltransferase RlmB (250 aa).

The S-adenosyl-L-methionine site is built by glycine 198, isoleucine 218, and leucine 227.

The protein belongs to the class IV-like SAM-binding methyltransferase superfamily. RNA methyltransferase TrmH family. RlmB subfamily.

The protein localises to the cytoplasm. It carries out the reaction guanosine(2251) in 23S rRNA + S-adenosyl-L-methionine = 2'-O-methylguanosine(2251) in 23S rRNA + S-adenosyl-L-homocysteine + H(+). In terms of biological role, specifically methylates the ribose of guanosine 2251 in 23S rRNA. The chain is 23S rRNA (guanosine-2'-O-)-methyltransferase RlmB from Coxiella burnetii (strain RSA 493 / Nine Mile phase I).